Here is a 65-residue protein sequence, read N- to C-terminus: Seminal plasma acrosin inhibitor A1 (65 aa).

The region spanning 1–59 is the Kazal-like domain; the sequence is TRKQPNCNVYRSHLFFCTRQMDPICGTNGKSYANPCIFCSEKGLRNQKFDFGHWGHCRE. Intrachain disulfides connect cysteine 7-cysteine 39, cysteine 17-cysteine 36, and cysteine 25-cysteine 57. The O-linked (GalNAc...) serine glycan is linked to serine 12. The O-linked (GalNAc...) serine glycan is linked to serine 62.

The identity of the O-linked saccharides are not reported in Ref.1. The O-linked polysaccharides on Ser-12 and Ser-62 are probably the mucin type linked to GalNAc. Seminal plasma.

It is found in the secreted. Its function is as follows. Inhibits acrosin. This chain is Seminal plasma acrosin inhibitor A1, found in Sus scrofa (Pig).